We begin with the raw amino-acid sequence, 104 residues long: Protein METHYLENE BLUE SENSITIVITY 2 (104 aa).

Positions 1 to 11 (MTGKAKPKKHT) are enriched in basic residues. 2 disordered regions span residues 1-46 (MTGK…GHAK) and 64-104 (IHHE…SLKK). 2 stretches are compositionally biased toward basic and acidic residues: residues 36 to 46 (RTGKEKGGHAK) and 73 to 82 (LTYEEPRNLH).

Its subcellular location is the nucleus. It is found in the cytoplasm. The protein resides in the stress granule. Its function is as follows. Required for acclimation to reactive oxygen species (ROS) responses downstream of beta-cyclocitral, including singlet oxygen 1O(2) detoxification reactions, especially upon light-mediated photooxidative stress, and leading to programmed cell death. Prevents leaf senescence. This is Protein METHYLENE BLUE SENSITIVITY 2 from Arabidopsis thaliana (Mouse-ear cress).